The sequence spans 125 residues: Histone H2B type 1 (125 aa).

The disordered stretch occupies residues 1-36 (MPEPAKSRPAPKKGSKKAVTKAQKKDGKERKRSRKE). Residue P2 is modified to N-acetylproline. Position 3 is an ADP-ribosyl glutamic acid (E3). At K6 the chain carries N6-(2-hydroxyisobutyryl)lysine; alternate. At K6 the chain carries N6-(beta-hydroxybutyryl)lysine; alternate. K6 is subject to N6-acetyllysine; alternate. K6 is modified (N6-butyryllysine; alternate). Residue K6 is modified to N6-crotonyllysine; alternate. Position 6 is an N6-lactoyllysine; alternate (K6). K6 participates in a covalent cross-link: Glycyl lysine isopeptide (Lys-Gly) (interchain with G-Cter in SUMO2); alternate. S7 carries the ADP-ribosylserine modification. The span at 9–19 (PAPKKGSKKAV) shows a compositional bias: basic residues. K12 is subject to N6-(beta-hydroxybutyryl)lysine; alternate. 2 positions are modified to N6-acetyllysine; alternate: K12 and K13. N6-crotonyllysine; alternate occurs at positions 12 and 13. K12 bears the N6-lactoyllysine; alternate mark. An N6-(2-hydroxyisobutyryl)lysine; alternate modification is found at K13. A Phosphoserine; by STK4/MST1 modification is found at S15. N6-acetyllysine; alternate is present on residues K16, K17, K21, and K24. Residues K16, K17, K21, and K24 each carry the N6-crotonyllysine; alternate modification. Residues K16, K17, K21, and K24 each carry the N6-lactoyllysine; alternate modification. The residue at position 17 (K17) is an N6-glutaryllysine; alternate. N6-(2-hydroxyisobutyryl)lysine; alternate is present on residues K21 and K24. Position 21 is an N6-(beta-hydroxybutyryl)lysine; alternate (K21). K21 carries the post-translational modification N6-butyryllysine; alternate. A Glycyl lysine isopeptide (Lys-Gly) (interchain with G-Cter in SUMO2); alternate cross-link involves residue K21. N6-(2-hydroxyisobutyryl)lysine is present on K25. K35 is modified (N6-(2-hydroxyisobutyryl)lysine; alternate). Residue K35 is modified to N6-(beta-hydroxybutyryl)lysine; alternate. Position 35 is an N6-crotonyllysine; alternate (K35). K35 carries the N6-glutaryllysine; alternate modification. K35 is subject to N6-succinyllysine; alternate. K35 is covalently cross-linked (Glycyl lysine isopeptide (Lys-Gly) (interchain with G-Cter in ubiquitin); alternate). E36 is subject to PolyADP-ribosyl glutamic acid. S37 bears the Phosphoserine; by AMPK mark. N6-(2-hydroxyisobutyryl)lysine; alternate is present on residues K44, K47, and K58. K44 carries the post-translational modification N6-lactoyllysine; alternate. Residues K44 and K47 each carry the N6-glutaryllysine; alternate modification. K47 bears the N6-methyllysine; alternate mark. K58 carries the post-translational modification N6,N6-dimethyllysine; alternate. Residue R79 is modified to Dimethylated arginine. K85 bears the N6-(2-hydroxyisobutyryl)lysine; alternate mark. K85 carries the N6-acetyllysine; alternate modification. An N6-lactoyllysine; alternate modification is found at K85. K85 is subject to N6,N6,N6-trimethyllysine; alternate. Residues R86 and R92 each carry the omega-N-methylarginine modification. Position 108 is an N6-(2-hydroxyisobutyryl)lysine; alternate (K108). K108 is modified (N6-lactoyllysine; alternate). K108 is subject to N6-glutaryllysine; alternate. K108 is modified (N6-methyllysine; alternate). O-linked (GlcNAc) serine glycosylation is present at S112. Phosphothreonine is present on T115. 2 positions are modified to N6-(2-hydroxyisobutyryl)lysine; alternate: K116 and K120. At K116 the chain carries N6-(beta-hydroxybutyryl)lysine; alternate. Residues K116 and K120 each carry the N6-lactoyllysine; alternate modification. Residues K116 and K120 each carry the N6-glutaryllysine; alternate modification. An N6-succinyllysine; alternate mark is found at K116 and K120. Position 116 is an N6-methylated lysine; alternate (K116). Residue K120 forms a Glycyl lysine isopeptide (Lys-Gly) (interchain with G-Cter in ubiquitin); alternate linkage.

This sequence belongs to the histone H2B family. In terms of assembly, the nucleosome is a histone octamer containing two molecules each of H2A, H2B, H3 and H4 assembled in one H3-H4 heterotetramer and two H2A-H2B heterodimers. The octamer wraps approximately 147 bp of DNA. In terms of processing, monoubiquitination at Lys-35 (H2BK34Ub) by the MSL1/MSL2 dimer is required for histone H3 'Lys-4' (H3K4me) and 'Lys-79' (H3K79me) methylation and transcription activation at specific gene loci, such as HOXA9 and MEIS1 loci. Similarly, monoubiquitination at Lys-120 (H2BK120Ub) by the RNF20/40 complex gives a specific tag for epigenetic transcriptional activation and is also prerequisite for histone H3 'Lys-4' and 'Lys-79' methylation. It also functions cooperatively with the FACT dimer to stimulate elongation by RNA polymerase II. H2BK120Ub also acts as a regulator of mRNA splicing: deubiquitination by USP49 is required for efficient cotranscriptional splicing of a large set of exons. Phosphorylated on Ser-15 (H2BS14ph) by STK4/MST1 during apoptosis; which facilitates apoptotic chromatin condensation. Also phosphorylated on Ser-15 in response to DNA double strand breaks (DSBs), and in correlation with somatic hypermutation and immunoglobulin class-switch recombination. Phosphorylation at Ser-37 (H2BS36ph) by AMPK in response to stress promotes transcription. Post-translationally, ADP-ribosylated by PARP1 or PARP2 on Ser-7 (H2BS6ADPr) in response to DNA damage. H2BS6ADPr promotes recruitment of CHD1L. Mono-ADP-ribosylated on Glu-3 (H2BE2ADPr) by PARP3 in response to single-strand breaks. Poly ADP-ribosylation on Glu-36 (H2BE35ADPr) by PARP1 regulates adipogenesis: it inhibits phosphorylation at Ser-37 (H2BS36ph), thereby blocking expression of pro-adipogenetic genes. In terms of processing, crotonylation (Kcr) is specifically present in male germ cells and marks testis-specific genes in post-meiotic cells, including X-linked genes that escape sex chromosome inactivation in haploid cells. Crotonylation marks active promoters and enhancers and confers resistance to transcriptional repressors. It is also associated with post-meiotically activated genes on autosomes. GlcNAcylation at Ser-112 promotes monoubiquitination of Lys-120. It fluctuates in response to extracellular glucose, and associates with transcribed genes. Post-translationally, lactylated in macrophages by EP300/P300 by using lactoyl-CoA directly derived from endogenous or exogenous lactate, leading to stimulates gene transcription.

Its subcellular location is the nucleus. The protein resides in the chromosome. Core component of nucleosome. Nucleosomes wrap and compact DNA into chromatin, limiting DNA accessibility to the cellular machineries which require DNA as a template. Histones thereby play a central role in transcription regulation, DNA repair, DNA replication and chromosomal stability. DNA accessibility is regulated via a complex set of post-translational modifications of histones, also called histone code, and nucleosome remodeling. In terms of biological role, has broad antibacterial activity. May contribute to the formation of the functional antimicrobial barrier of the colonic epithelium, and to the bactericidal activity of amniotic fluid. This is Histone H2B type 1 from Rattus norvegicus (Rat).